The chain runs to 129 residues: Large ribosomal subunit protein bL12c (129 aa).

The protein belongs to the bacterial ribosomal protein bL12 family. As to quaternary structure, homodimer. Part of the ribosomal stalk of the 50S ribosomal subunit. Forms a multimeric L10(L12)X complex, where L10 forms an elongated spine to which 2 to 4 L12 dimers bind in a sequential fashion. Binds GTP-bound translation factors.

The protein localises to the plastid. Its subcellular location is the chloroplast. Forms part of the ribosomal stalk which helps the ribosome interact with GTP-bound translation factors. Is thus essential for accurate translation. The polypeptide is Large ribosomal subunit protein bL12c (Oltmannsiellopsis viridis (Marine flagellate)).